We begin with the raw amino-acid sequence, 136 residues long: Protein NrdI (136 aa).

It belongs to the NrdI family.

Its function is as follows. Probably involved in ribonucleotide reductase function. The chain is Protein NrdI from Salmonella paratyphi B (strain ATCC BAA-1250 / SPB7).